A 500-amino-acid chain; its full sequence is Catalase (500 aa).

Catalysis depends on residues His59 and Asn131. Heme is bound at residue Tyr339.

Belongs to the catalase family. The cofactor is heme.

The catalysed reaction is 2 H2O2 = O2 + 2 H2O. Functionally, decomposes hydrogen peroxide into water and oxygen; serves to protect cells from the toxic effects of hydrogen peroxide. This is Catalase (katA) from Neisseria gonorrhoeae.